Reading from the N-terminus, the 112-residue chain is Nucleoid-associated protein FTF0810c (112 aa).

The tract at residues 1 to 27 (MNFDMSKLMQQAQKMQEQMKKAQQERE) is disordered. Positions 17-27 (EQMKKAQQERE) are enriched in basic and acidic residues.

It belongs to the YbaB/EbfC family. In terms of assembly, homodimer.

The protein localises to the cytoplasm. Its subcellular location is the nucleoid. In terms of biological role, binds to DNA and alters its conformation. May be involved in regulation of gene expression, nucleoid organization and DNA protection. The protein is Nucleoid-associated protein FTF0810c of Francisella tularensis subsp. tularensis (strain FSC 198).